Reading from the N-terminus, the 317-residue chain is Beta-ketoacyl-[acyl-carrier-protein] synthase III (317 aa).

Active-site residues include Cys112 and His244. Residues 245–249 (QANLR) are ACP-binding. Residue Asn274 is part of the active site.

The protein belongs to the thiolase-like superfamily. FabH family. In terms of assembly, homodimer.

It is found in the cytoplasm. The enzyme catalyses malonyl-[ACP] + acetyl-CoA + H(+) = 3-oxobutanoyl-[ACP] + CO2 + CoA. Its pathway is lipid metabolism; fatty acid biosynthesis. Catalyzes the condensation reaction of fatty acid synthesis by the addition to an acyl acceptor of two carbons from malonyl-ACP. Catalyzes the first condensation reaction which initiates fatty acid synthesis and may therefore play a role in governing the total rate of fatty acid production. Possesses both acetoacetyl-ACP synthase and acetyl transacylase activities. Its substrate specificity determines the biosynthesis of branched-chain and/or straight-chain of fatty acids. The protein is Beta-ketoacyl-[acyl-carrier-protein] synthase III of Blochmanniella pennsylvanica (strain BPEN).